Consider the following 486-residue polypeptide: MAGLFFKPGLLPWYARNPPGWSQLFLGTVCKGDFTRVIATKCQKGQKSQKKPSHLGPLDGSWQERLADVVTPLWRLSYEEQLKVKFAAQKKILQRLESYIQMLNGVSVTTAVPKSERLSCLLHPIIPSPVINGYRNKSTFSVNRGPDGNPKTVGFYLGTWRDGNMVCVQSNHLKNIPEKHSQVAQYYEVFLRQSPLEPCLVFHEGGYWRELTVRTNSQGHTMAIITFHPQNLSQEEFHVQKEIVKEFFIRGPGAACDLTSLYFQESTMTRCSHQQSPYQLLFGEPYIFEELLSLKIRISPDAFFQINTAGAEMLYRTVGELTGVNSDTILLDICCGTGVIGLSLSQHTSRVLGIELVEQAVEDARWTAAFNGITNSEFHTGRAEKILPGLLKSKEDGQSIVAVVNPARAGLHYKVIQAIRNFRAIHTLVFVSCKLHGESTRNVIELCCPPDPAKKLLGEPFVLQQVVPVDLFPHTPHCELVLLFTR.

3 residues coordinate S-adenosyl-L-methionine: Gln-305, Glu-355, and Asn-405. The active-site Nucleophile is Cys-433. Glu-479 (proton acceptor) is an active-site residue.

This sequence belongs to the class I-like SAM-binding methyltransferase superfamily. RNA M5U methyltransferase family.

The protein resides in the mitochondrion matrix. It catalyses the reaction uridine(54) in tRNA + S-adenosyl-L-methionine = 5-methyluridine(54) in tRNA + S-adenosyl-L-homocysteine + H(+). It carries out the reaction a uridine in 12S rRNA + S-adenosyl-L-methionine = a 5-methyluridine in 12S rRNA + S-adenosyl-L-homocysteine + H(+). Functionally, mitochondrial S-adenosyl-L-methionine-dependent methyltransferase that catalyzes the formation of 5-methyl-uridine in tRNAs and 12S rRNA. Catalyzes the methylation of uridine at position 54 (m5U54) in all tRNAs. Specifically methylates the uridine in position 429 of 12S rRNA (m5U429). Does not affect RNA stability or mitochondrial translation. This chain is tRNA (uracil-5-)-methyltransferase homolog B (TRMT2B), found in Pongo abelii (Sumatran orangutan).